The chain runs to 275 residues: MAIRLYKAYTPGTRNRTISTFNEITNKKPEKTLIRKNHRRQGRNSRGIITSRHRGKGHKRLYRTIDFKRNKYDIKAKVVSIEYDPNRNARIALLHYSDGEKRYILHPRSLNIGETVISGIKASLEVGNSLPLNYIPLGTAVHNIELNPLKGGQIVRAAGTYAQIVAKEGAFVTLKLPSNEVRLIRKECFATIGQVGNIDASNINIGKAGRNRWLSKRPKVRGVVMNPIDHPHGGGEGRSPIGKPHPVTPWGKPALGRKTRKKPKYSNRYILRKRK.

Disordered stretches follow at residues 36-56 (KNHR…HRGK) and 224-275 (VMNP…RKRK). A compositionally biased stretch (basic residues) spans 255–275 (LGRKTRKKPKYSNRYILRKRK).

It belongs to the universal ribosomal protein uL2 family. As to quaternary structure, part of the 50S ribosomal subunit.

Its subcellular location is the plastid. The protein localises to the chloroplast. In Gracilaria tenuistipitata var. liui (Red alga), this protein is Large ribosomal subunit protein uL2c (rpl2).